The primary structure comprises 540 residues: Chaperonin GroEL (540 aa).

Residues 30-33 (TLGP), K51, 87-91 (DGTTT), G415, 479-481 (NAA), and D495 each bind ATP.

This sequence belongs to the chaperonin (HSP60) family. In terms of assembly, forms a cylinder of 14 subunits composed of two heptameric rings stacked back-to-back. Interacts with the co-chaperonin GroES.

The protein localises to the cytoplasm. It carries out the reaction ATP + H2O + a folded polypeptide = ADP + phosphate + an unfolded polypeptide.. In terms of biological role, together with its co-chaperonin GroES, plays an essential role in assisting protein folding. The GroEL-GroES system forms a nano-cage that allows encapsulation of the non-native substrate proteins and provides a physical environment optimized to promote and accelerate protein folding. The polypeptide is Chaperonin GroEL (Pluralibacter gergoviae (Enterobacter gergoviae)).